Here is a 149-residue protein sequence, read N- to C-terminus: Pleckstrin homology domain-containing family J member 1 (149 aa).

The region spanning 15 to 108 (RAEKAAELGM…WVEALTNASY (94 aa)) is the PH domain.

The sequence is that of Pleckstrin homology domain-containing family J member 1 (plekhj1) from Xenopus laevis (African clawed frog).